The sequence spans 94 residues: RNA-binding protein Hfq (94 aa).

The Sm domain occupies 9-68 (DPFLNALRRERVPVSIYLVNGIKLQGQVESFDQFVILLKNTVSQMVYKHAISTVVPARPF). Residues 70–94 (VSAHHSSPAPTPAGGFNGQNDETSE) are disordered.

This sequence belongs to the Hfq family. In terms of assembly, homohexamer.

Its function is as follows. RNA chaperone that binds small regulatory RNA (sRNAs) and mRNAs to facilitate mRNA translational regulation in response to envelope stress, environmental stress and changes in metabolite concentrations. Also binds with high specificity to tRNAs. The chain is RNA-binding protein Hfq from Shewanella woodyi (strain ATCC 51908 / MS32).